A 288-amino-acid polypeptide reads, in one-letter code: uncharacterized protein (288 aa).

A compositionally biased stretch (basic and acidic residues) spans 1–12; sequence MTEGRCAQHPDG. The interval 1 to 20 is disordered; sequence MTEGRCAQHPDGLDVQDVCD.

The protein belongs to the class IV-like SAM-binding methyltransferase superfamily. RNA methyltransferase TrmH family.

This is an uncharacterized protein from Mycobacterium bovis (strain ATCC BAA-935 / AF2122/97).